Reading from the N-terminus, the 159-residue chain is Heat shock protein beta-9 (159 aa).

The region spanning leucine 36–leucine 147 is the sHSP domain.

Belongs to the small heat shock protein (HSP20) family. Testis specific.

The protein localises to the cytoplasm. Its subcellular location is the nucleus. The protein is Heat shock protein beta-9 (HSPB9) of Homo sapiens (Human).